Here is a 793-residue protein sequence, read N- to C-terminus: Xaa-Pro dipeptidyl-peptidase (793 aa).

Residues Ser363, Asp483, and His514 each act as charge relay system in the active site.

This sequence belongs to the peptidase S15 family. As to quaternary structure, homodimer.

The protein localises to the cytoplasm. It carries out the reaction Hydrolyzes Xaa-Pro-|- bonds to release unblocked, N-terminal dipeptides from substrates including Ala-Pro-|-p-nitroanilide and (sequentially) Tyr-Pro-|-Phe-Pro-|-Gly-Pro-|-Ile.. In terms of biological role, removes N-terminal dipeptides sequentially from polypeptides having unsubstituted N-termini provided that the penultimate residue is proline. This Lactobacillus helveticus (strain DPC 4571) protein is Xaa-Pro dipeptidyl-peptidase.